The sequence spans 438 residues: Argininosuccinate lyase (438 aa).

Belongs to the lyase 1 family. Argininosuccinate lyase subfamily.

It is found in the cytoplasm. The catalysed reaction is 2-(N(omega)-L-arginino)succinate = fumarate + L-arginine. The protein operates within amino-acid biosynthesis; L-arginine biosynthesis; L-arginine from L-ornithine and carbamoyl phosphate: step 3/3. This chain is Argininosuccinate lyase, found in Clostridium tetani (strain Massachusetts / E88).